Here is a 464-residue protein sequence, read N- to C-terminus: Spore coat protein SP65 (464 aa).

Positions 1-17 are cleaved as a signal peptide; sequence MKVLLLLVCLVFAYVNA. Positions 21–43 constitute a Follistatin-like 1 domain; the sequence is ACYNVVCPSNYQCRAEGDQAYCV. An N-linked (GlcNAc...) asparagine glycan is attached at asparagine 111. Follistatin-like domains lie at 121–143 and 151–173; these read VCRDFQCPVGTHCFNGERGPHCV and LCRVTKCSYDFTCKMVRGNPTCL. Asparagine 247 carries N-linked (GlcNAc...) asparagine glycosylation. A disordered region spans residues 250–320; that stretch reads STTGATTGAT…STTGAATTAP (71 aa).

Binds to the C-terminal region of pspB.

Its subcellular location is the spore wall. In terms of biological role, forms a triad with cellulose and pspB that is essential for spore outer layer formation. The protein is Spore coat protein SP65 (cotE) of Dictyostelium discoideum (Social amoeba).